Here is a 342-residue protein sequence, read N- to C-terminus: Holliday junction branch migration complex subunit RuvB (342 aa).

The interval 1-185 (MTVKPLRDVT…FPIQERLEYY (185 aa)) is large ATPase domain (RuvB-L). ATP contacts are provided by residues leucine 24, arginine 25, glycine 66, lysine 69, threonine 70, serine 71, 132 to 134 (EDY), arginine 175, tyrosine 185, and arginine 222. Mg(2+) is bound at residue threonine 70. The tract at residues 186-256 (GPAELKEIAV…VVDRTLRRLE (71 aa)) is small ATPAse domain (RuvB-S). The interval 259–342 (ARGLDAMDRR…RPGGKQGSLV (84 aa)) is head domain (RuvB-H). DNA-binding residues include arginine 314 and arginine 319.

The protein belongs to the RuvB family. In terms of assembly, homohexamer. Forms an RuvA(8)-RuvB(12)-Holliday junction (HJ) complex. HJ DNA is sandwiched between 2 RuvA tetramers; dsDNA enters through RuvA and exits via RuvB. An RuvB hexamer assembles on each DNA strand where it exits the tetramer. Each RuvB hexamer is contacted by two RuvA subunits (via domain III) on 2 adjacent RuvB subunits; this complex drives branch migration. In the full resolvosome a probable DNA-RuvA(4)-RuvB(12)-RuvC(2) complex forms which resolves the HJ.

The protein resides in the cytoplasm. The catalysed reaction is ATP + H2O = ADP + phosphate + H(+). Its function is as follows. The RuvA-RuvB-RuvC complex processes Holliday junction (HJ) DNA during genetic recombination and DNA repair, while the RuvA-RuvB complex plays an important role in the rescue of blocked DNA replication forks via replication fork reversal (RFR). RuvA specifically binds to HJ cruciform DNA, conferring on it an open structure. The RuvB hexamer acts as an ATP-dependent pump, pulling dsDNA into and through the RuvAB complex. RuvB forms 2 homohexamers on either side of HJ DNA bound by 1 or 2 RuvA tetramers; 4 subunits per hexamer contact DNA at a time. Coordinated motions by a converter formed by DNA-disengaged RuvB subunits stimulates ATP hydrolysis and nucleotide exchange. Immobilization of the converter enables RuvB to convert the ATP-contained energy into a lever motion, pulling 2 nucleotides of DNA out of the RuvA tetramer per ATP hydrolyzed, thus driving DNA branch migration. The RuvB motors rotate together with the DNA substrate, which together with the progressing nucleotide cycle form the mechanistic basis for DNA recombination by continuous HJ branch migration. Branch migration allows RuvC to scan DNA until it finds its consensus sequence, where it cleaves and resolves cruciform DNA. The chain is Holliday junction branch migration complex subunit RuvB from Anaeromyxobacter sp. (strain K).